Consider the following 354-residue polypeptide: Protein-arginine kinase (354 aa).

The 231-residue stretch at 24-254 folds into the Phosphagen kinase C-terminal domain; it reads IVLSSRIRLA…QQIIQQEKMA (231 aa). ATP-binding positions include 27-31, His-92, Arg-125, 176-180, and 207-212; these read SSRIR, RASVM, and RGIYGE. The short motif at 337-342 is the RDXXRA motif of the pArg binding pocket involved in allosteric regulation element; the sequence is RDYRRA.

Belongs to the ATP:guanido phosphotransferase family.

It catalyses the reaction L-arginyl-[protein] + ATP = N(omega)-phospho-L-arginyl-[protein] + ADP + H(+). Its activity is regulated as follows. Appears to be allosterically activated by the binding of pArg-containing polypeptides to the pArg-binding pocket localized in the C-terminal domain of McsB. Catalyzes the specific phosphorylation of arginine residues in a large number of proteins. Is part of the bacterial stress response system. Protein arginine phosphorylation has a physiologically important role and is involved in the regulation of many critical cellular processes, such as protein homeostasis, motility, competence, and stringent and stress responses, by regulating gene expression and protein activity. The chain is Protein-arginine kinase from Bacillus thuringiensis subsp. konkukian (strain 97-27).